We begin with the raw amino-acid sequence, 324 residues long: Antihemorrhagic factor cHLP-A (324 aa).

The signal sequence occupies residues 1 to 19 (MNSLVALVLLGQIIGSTLS). Cystatin fetuin-A-type domains lie at 21 to 130 (QLGP…VKCK) and 141 to 254 (RNCP…SDCV). 6 disulfide bridges follow: Cys28–Cys315, Cys85–Cys96, Cys110–Cys129, Cys143–Cys146, Cys205–Cys217, and Cys230–Cys253. N-linked (GlcNAc...) asparagine glycosylation is present at Asn204. N-linked (GlcNAc...) asparagine glycosylation occurs at Asn282.

This sequence belongs to the fetuin family. Homodimer. Expressed by the liver.

Its subcellular location is the secreted. Functionally, potent inhibitor of hemorrhagic activity but also proteolytic activities. Inhibition occurs by formation of a non-covalent complex between this protein and the proteinases at their metalloproteinase domains. The polypeptide is Antihemorrhagic factor cHLP-A (Gloydius brevicauda (Korean slamosa snake)).